Here is a 192-residue protein sequence, read N- to C-terminus: Large ribosomal subunit protein bL9 (192 aa).

Positions 172–192 are disordered; the sequence is DALRPEDFFDPEADGVDEDEA. The span at 179–192 shows a compositional bias: acidic residues; sequence FFDPEADGVDEDEA.

This sequence belongs to the bacterial ribosomal protein bL9 family.

Its function is as follows. Binds to the 23S rRNA. This is Large ribosomal subunit protein bL9 from Rhizobium johnstonii (strain DSM 114642 / LMG 32736 / 3841) (Rhizobium leguminosarum bv. viciae).